The following is an 842-amino-acid chain: MSENNNDKTTGKKTLTLKRSVLETSTVKQNFSHGRTKAVVVETKRRKITRPDEKAEPLQPITKPHVAPQRSKPRFEEKKPQEAMAKSNLSSAEMEARLRALEEAHIQEKITREQAEKEARLAKEREEILKQEIQEQEILQKQEEEKPTVPISSVSSDPSLIEKTDIPIVPKNTTVIEKRKIDENQEEERHSRRANPAKSEIRAPKIVKGADERRRGKLTLNSALDEEGSARGRSMAAMRRRQEKFKRAQNQEPREKISREVVLPETITIQELAQRMTERSVDVIKFLMKQGQMMKPGDVIDADVAELIAVEFGHTVKRVLESDVEEGIFNITDNPQNMQPRPPVVTIMGHVDHGKTSLLDAIRKANVVSGEAGGITQHIGAYQVEQNGQKITFIDTPGHAAFTAMRARGARVTDIAVLVVAADDSVMPQTIESINHAKAAGVPIIVAINKIDKPAANAQKVRTELLQHEVFVETMGGETLDVEVSAKTGQNLDKLLEAILLQAEMLDLKADPQRTAEGVVIEAKLDRGRGSVATVLVQKGTLHPSDIIVAGNEWGRVRALIDDHGRHVKEAVPSTPIEILGMQGTPQAGDRFAVVTHEAKAREISEYRQRLARDKAVARQTGSRGSLEQMMTKLQTTGVKEFSLIIKGDVQGSIEAIASALEKLGNDEVRARVVHSGAGGITESDISLAEASNSAVIGFNVRANKQARDFAKTQGIEIRYYNIIYDLVDDIKAAMSGLLSPEQRETFLGNAEILEVFNITKIGKVAGCRVTEGKIERGAGVRLIRDNIVIHEGKLKTLKRFKDEVNEVQSGQECGIAFENYEDMRAGDIIETFRIEHINRTL.

Disordered regions lie at residues 42-91 (ETKR…NLSS) and 139-253 (LQKQ…NQEP). 2 stretches are compositionally biased toward basic and acidic residues: residues 176-190 (IEKRKIDENQEEERH) and 199-214 (SEIRAPKIVKGADERR). The tr-type G domain maps to 340 to 509 (PRPPVVTIMG…LLQAEMLDLK (170 aa)). Residues 349–356 (GHVDHGKT) are G1. 349 to 356 (GHVDHGKT) contacts GTP. Residues 374–378 (GITQH) form a G2 region. The interval 395–398 (DTPG) is G3. GTP-binding positions include 395–399 (DTPGH) and 449–452 (NKID). Positions 449-452 (NKID) are G4. Residues 485-487 (SAK) form a G5 region.

It belongs to the TRAFAC class translation factor GTPase superfamily. Classic translation factor GTPase family. IF-2 subfamily.

Its subcellular location is the cytoplasm. Functionally, one of the essential components for the initiation of protein synthesis. Protects formylmethionyl-tRNA from spontaneous hydrolysis and promotes its binding to the 30S ribosomal subunits. Also involved in the hydrolysis of GTP during the formation of the 70S ribosomal complex. This chain is Translation initiation factor IF-2, found in Bartonella tribocorum (strain CIP 105476 / IBS 506).